A 494-amino-acid polypeptide reads, in one-letter code: Ketol-acid reductoisomerase (NADP(+)) (494 aa).

The KARI N-terminal Rossmann domain occupies 14–208 (LDQLGRCRFM…GGHRAGCLES (195 aa)). NADP(+) is bound by residues 45 to 48 (CGAQ), arginine 68, arginine 76, serine 78, and 108 to 110 (DKQ). The active site involves histidine 132. Glycine 158 contacts NADP(+). KARI C-terminal knotted domains follow at residues 209-344 (SFVA…NYPS) and 345-487 (TDVE…MTDM). Mg(2+) contacts are provided by aspartate 217, glutamate 221, glutamate 389, and glutamate 393. Residue serine 414 coordinates substrate.

It belongs to the ketol-acid reductoisomerase family. It depends on Mg(2+) as a cofactor.

It catalyses the reaction (2R)-2,3-dihydroxy-3-methylbutanoate + NADP(+) = (2S)-2-acetolactate + NADPH + H(+). The enzyme catalyses (2R,3R)-2,3-dihydroxy-3-methylpentanoate + NADP(+) = (S)-2-ethyl-2-hydroxy-3-oxobutanoate + NADPH + H(+). Its pathway is amino-acid biosynthesis; L-isoleucine biosynthesis; L-isoleucine from 2-oxobutanoate: step 2/4. The protein operates within amino-acid biosynthesis; L-valine biosynthesis; L-valine from pyruvate: step 2/4. Functionally, involved in the biosynthesis of branched-chain amino acids (BCAA). Catalyzes an alkyl-migration followed by a ketol-acid reduction of (S)-2-acetolactate (S2AL) to yield (R)-2,3-dihydroxy-isovalerate. In the isomerase reaction, S2AL is rearranged via a Mg-dependent methyl migration to produce 3-hydroxy-3-methyl-2-ketobutyrate (HMKB). In the reductase reaction, this 2-ketoacid undergoes a metal-dependent reduction by NADPH to yield (R)-2,3-dihydroxy-isovalerate. The sequence is that of Ketol-acid reductoisomerase (NADP(+)) from Vibrio vulnificus (strain CMCP6).